A 179-amino-acid polypeptide reads, in one-letter code: Small ribosomal subunit protein uS5 (179 aa).

In terms of domain architecture, S5 DRBM spans Leu-13–Val-76. The segment at Asp-160–Ala-179 is disordered.

Belongs to the universal ribosomal protein uS5 family. In terms of assembly, part of the 30S ribosomal subunit. Contacts proteins S4 and S8.

With S4 and S12 plays an important role in translational accuracy. Its function is as follows. Located at the back of the 30S subunit body where it stabilizes the conformation of the head with respect to the body. The protein is Small ribosomal subunit protein uS5 of Chloroflexus aggregans (strain MD-66 / DSM 9485).